The following is a 130-amino-acid chain: MYRALTRDIEVTVDPYYLEEQSDPDDDRYVWGYKVVIANNSDVPVKLVNRYWHITDQNGQVDEVYGPGVVGEQPQLKPGDSYEYSSGCPLDTPSGLMFGHYEMETENGEVFNVTIPAFSLDSPGLMRVLN.

Positions 3-127 (RALTRDIEVT…FSLDSPGLMR (125 aa)) constitute an ApaG domain.

The protein is Protein ApaG of Agrobacterium fabrum (strain C58 / ATCC 33970) (Agrobacterium tumefaciens (strain C58)).